Here is a 156-residue protein sequence, read N- to C-terminus: MTAGGRRMSMVDVTGKKEEIRIAEASGFLRLTEDGVNAVKSGESHPQGKGDPIEVAKVAAILAVKKTPELVPHCHPIKITGVDVDVEVLEDGVKMSVRVKSEGKTGVEMDALTGLVVGLVTLWDMVKYAEKDEEGQYPHTRIENVRVVEKIIKEKE.

109-110 (MD) contributes to the substrate binding site. Asp124 is an active-site residue.

The protein belongs to the MoaC family. In terms of assembly, homohexamer; trimer of dimers.

The catalysed reaction is (8S)-3',8-cyclo-7,8-dihydroguanosine 5'-triphosphate = cyclic pyranopterin phosphate + diphosphate. The protein operates within cofactor biosynthesis; molybdopterin biosynthesis. Its function is as follows. Catalyzes the conversion of (8S)-3',8-cyclo-7,8-dihydroguanosine 5'-triphosphate to cyclic pyranopterin monophosphate (cPMP). The polypeptide is Probable cyclic pyranopterin monophosphate synthase (Methanopyrus kandleri (strain AV19 / DSM 6324 / JCM 9639 / NBRC 100938)).